The chain runs to 195 residues: uncharacterized protein (195 aa).

A disordered region spans residues 1–35 (MASSSSAALRPFGTARLTPGRQTGRQTQQQISAPE). A compositionally biased stretch (low complexity) spans 20–30 (GRQTGRQTQQQ). The MSP domain occupies 76–184 (GVTVIPRVAR…PASINMALEA (109 aa)).

This is an uncharacterized protein from Caenorhabditis elegans.